Reading from the N-terminus, the 84-residue chain is Small ribosomal subunit protein bS20 (84 aa).

The tract at residues 1-28 (MPNIKSAIKRVKTADTRNSRNASQRSAM) is disordered.

It belongs to the bacterial ribosomal protein bS20 family.

Functionally, binds directly to 16S ribosomal RNA. This chain is Small ribosomal subunit protein bS20, found in Listeria welshimeri serovar 6b (strain ATCC 35897 / DSM 20650 / CCUG 15529 / CIP 8149 / NCTC 11857 / SLCC 5334 / V8).